Reading from the N-terminus, the 91-residue chain is Small ribosomal subunit protein bS16c (91 aa).

It belongs to the bacterial ribosomal protein bS16 family.

The protein resides in the plastid. It is found in the chloroplast. This is Small ribosomal subunit protein bS16c from Vitis vinifera (Grape).